We begin with the raw amino-acid sequence, 83 residues long: Cell division topological specificity factor (83 aa).

This sequence belongs to the MinE family.

In terms of biological role, prevents the cell division inhibition by proteins MinC and MinD at internal division sites while permitting inhibition at polar sites. This ensures cell division at the proper site by restricting the formation of a division septum at the midpoint of the long axis of the cell. This is Cell division topological specificity factor from Alcanivorax borkumensis (strain ATCC 700651 / DSM 11573 / NCIMB 13689 / SK2).